We begin with the raw amino-acid sequence, 216 residues long: Vacuolar iron transporter homolog 4 (216 aa).

Positions 1 to 29 (MAATNGDAELTVAEEAKEEEEATDDGGGG) are disordered. At 1-36 (MAATNGDAELTVAEEAKEEEEATDDGGGGVSSQWLR) the chain is on the cytoplasmic side. A helical transmembrane segment spans residues 37-57 (AAVLGASDGLVSTAALMLGIG). Residues 58–65 (AARPADAR) lie on the Vacuolar side of the membrane. The chain crosses the membrane as a helical span at residues 66 to 86 (AVLLSGLAGLVAGACSMAIGE). Topologically, residues 87–134 (YVSVHVQLDVELADLERRRRRGGPAPAGLGLHAAAAAVSRPGQAAAAS) are cytoplasmic. A helical transmembrane segment spans residues 135-155 (ALSFAAGAALPLLAAWFVAGA). The Vacuolar portion of the chain corresponds to 156-157 (YR). Residues 158 to 178 (VRVVVVVATASLALAAFGAAG) traverse the membrane as a helical segment. The Cytoplasmic segment spans residues 179–190 (ARLGRAPGGRAG). A helical transmembrane segment spans residues 191 to 211 (LRVVVGGLLAMAATYGVMKLF). Residues 212–216 (RTHGV) are Vacuolar-facing.

Belongs to the CCC1 family.

Its subcellular location is the vacuole membrane. It carries out the reaction Fe(2+)(in) = Fe(2+)(out). Probable vacuolar iron transporter that may be involved in the regulation of iron distribution throughout the plant. This is Vacuolar iron transporter homolog 4 from Oryza sativa subsp. japonica (Rice).